The primary structure comprises 146 residues: uncharacterized protein (146 aa).

Residues 1–137 form the HTH marR-type domain; it reads MLSQEFFNSF…TINVMNQIHE (137 aa).

This is an uncharacterized protein from Staphylococcus aureus (strain N315).